The primary structure comprises 454 residues: Diaminobutyrate--2-oxoglutarate aminotransferase (454 aa).

At Lys-287 the chain carries N6-(pyridoxal phosphate)lysine.

It belongs to the class-III pyridoxal-phosphate-dependent aminotransferase family. Requires pyridoxal 5'-phosphate as cofactor.

It carries out the reaction L-2,4-diaminobutanoate + 2-oxoglutarate = L-aspartate 4-semialdehyde + L-glutamate. It participates in amine and polyamine biosynthesis; 1,3-diaminopropane biosynthesis; 1,3-diaminopropane from L-aspartate 4-semialdehyde: step 1/2. The protein is Diaminobutyrate--2-oxoglutarate aminotransferase (dat) of Haemophilus influenzae (strain ATCC 51907 / DSM 11121 / KW20 / Rd).